The chain runs to 1165 residues: Pesticidal crystal protein Cry1Da (1165 aa).

The protein belongs to the delta endotoxin family.

Functionally, promotes colloidosmotic lysis by binding to the midgut epithelial cells of many lepidopteran larvae. In Bacillus thuringiensis subsp. aizawai, this protein is Pesticidal crystal protein Cry1Da (cry1Da).